The chain runs to 194 residues: Adenylate kinase (194 aa).

10–15 (GAGKGT) serves as a coordination point for ATP. The interval 30–59 (STGDMLRAAVAQQSEIGKRAKAVMDAGQLV) is NMP. Residues threonine 31, arginine 36, 57–59 (QLV), 85–88 (GYPR), and glutamine 92 contribute to the AMP site. Residues 126–142 (SRVAETIAKGGQVRSDD) are LID. Residue arginine 127 participates in ATP binding. Positions 139 and 150 each coordinate AMP. Residue alanine 178 coordinates ATP.

The protein belongs to the adenylate kinase family. In terms of assembly, monomer.

Its subcellular location is the cytoplasm. It carries out the reaction AMP + ATP = 2 ADP. It participates in purine metabolism; AMP biosynthesis via salvage pathway; AMP from ADP: step 1/1. Catalyzes the reversible transfer of the terminal phosphate group between ATP and AMP. Plays an important role in cellular energy homeostasis and in adenine nucleotide metabolism. The chain is Adenylate kinase from Brucella anthropi (strain ATCC 49188 / DSM 6882 / CCUG 24695 / JCM 21032 / LMG 3331 / NBRC 15819 / NCTC 12168 / Alc 37) (Ochrobactrum anthropi).